The chain runs to 693 residues: Nuclear autoantigenic sperm protein (693 aa).

The interval 25–415 (GVHVEEEEGE…ENKSLPENEE (391 aa)) is disordered. The histone-binding stretch occupies residues 29-40 (EEEEGEKTEEES). Over residues 29–53 (EEEEGEKTEEESLVENNDNVDEEAR) the composition is skewed to acidic residues. Residue T36 is modified to Phosphothreonine. S40 is subject to Phosphoserine. Basic and acidic residues-rich tracts occupy residues 54–74 (EELREQVYDAMGEKEESKKTE) and 82–99 (ETAKEQESEMEKGGREDM). T83 carries the phosphothreonine modification. Phosphoserine occurs at positions 89 and 102. Positions 124–157 (EEAEGAAAPEGLNEAEVTSGKSEQEAADAEKGKS) are histone-binding. Residues 128–139 (GAAAPEGLNEAE) are compositionally biased toward low complexity. Residues 145 to 156 (SEQEAADAEKGK) show a composition bias toward basic and acidic residues. Position 156 is an N6-acetyllysine (K156). S157 carries the post-translational modification Phosphoserine. Basic and acidic residues predominate over residues 164 to 187 (QEEHKEQVEEKQGEVIVRIEKPTE). The residue at position 199 (K199) is an N6-acetyllysine. Residues S232, S304, S315, S327, and S356 each carry the phosphoserine modification. The segment covering 307-322 (RVTETKGGSELEEVRA) has biased composition (basic and acidic residues). A phosphothreonine mark is found at T369 and T382. A histone-binding region spans residues 374–418 (EQMKEGEETEGSEEEDKENDKAEEETPNDSVLENKSLPENEEEEI). The segment covering 380–400 (EETEGSEEEDKENDKAEEETP) has biased composition (acidic residues). A phosphoserine mark is found at S385, S403, and S409. TPR repeat units lie at residues 448–481 (AQAHLKLGEVSVESQNYIQAVEEFQACLSLQEQY) and 490–523 (AETHYQLGLAYGYNSQYDEAVAQFSKSIEVIEKR). Residues 510–565 (VAQFSKSIEVIEKRMAVLNEQMKEAEGSSTEYEKEIEELKELLPEIREKIEDAKES) adopt a coiled-coil conformation. Position 568 is a phosphoserine (S568). The interval 583-693 (SSTSGFTPSG…AGATVESTAC (111 aa)) is disordered. Position 589 is a phosphothreonine (T589). Residues S611 and S612 each carry the phosphoserine modification. Positions 622–628 (VRKKRKP) match the Nuclear localization signal motif. Basic and acidic residues predominate over residues 627 to 645 (KPEEESPRKDDAKKAKQEP). S632 carries the phosphoserine modification. K642 is covalently cross-linked (Glycyl lysine isopeptide (Lys-Gly) (interchain with G-Cter in SUMO1)). A phosphoserine mark is found at S651, S657, and S662.

The protein belongs to the NASP family. In terms of assembly, binds to linker H1 histones. Interacts with histones H2A, H2B, H3 and H4. Interacts with histone H3.3. Interacts with histones H3 and H4; NASP is a histone chaperone that stabilizes and maintains a soluble pool of histone H3-H4 dimers. Interacts with ASF1A and ASF1B; the interaction is probably indirect and mediated by H3-H4. Also binds to HSP90 in the cytoplasm. This interaction stimulates binding of NASP to H1-6/H1T. In terms of tissue distribution, testis- and sperm-specific.

The protein localises to the cytoplasm. The protein resides in the nucleus. Functionally, component of the histone chaperone network. Binds and stabilizes histone H3-H4 not bound to chromatin to maintain a soluble reservoir and modulate degradation by chaperone-mediated autophagy. Required for DNA replication, normal cell cycle progression and cell proliferation. Forms a cytoplasmic complex with HSP90 and H1 linker histones and stimulates HSP90 ATPase activity. NASP and H1 histone are subsequently released from the complex and translocate to the nucleus where the histone is released for binding to DNA. The polypeptide is Nuclear autoantigenic sperm protein (NASP) (Oryctolagus cuniculus (Rabbit)).